A 461-amino-acid chain; its full sequence is UDP-glycosyltransferase 88B1 (461 aa).

Residues S278, 340–341 (WA), 358–366 (HCGWNSSLE), and 380–383 (YAEQ) contribute to the UDP-alpha-D-glucose site.

It belongs to the UDP-glycosyltransferase family.

In terms of biological role, may glycosylate diterpenes or flavonols in leaves. The sequence is that of UDP-glycosyltransferase 88B1 from Stevia rebaudiana (Stevia).